A 245-amino-acid polypeptide reads, in one-letter code: Ninjurin-A (245 aa).

At 1 to 170 (MSNLEHITLE…TSSQHPYFYP (170 aa)) the chain is on the extracellular side. 2 N-linked (GlcNAc...) asparagine glycosylation sites follow: Asn19 and Asn28. The interval 32 to 101 (HSYGGAIDGR…NVNVNVPNGG (70 aa)) is disordered. Residues 92 to 101 (NVNVNVPNGG) are compositionally biased toward low complexity. A helix alpha1 region spans residues 135–146 (KKTLAQGMMDLA). The tract at residues 149-165 (SANANQLRYVLETSSQH) is helix alpha2. A helical transmembrane segment spans residues 171-191 (SLLFISLSIIFQIAVGVGLIL). The Cytoplasmic segment spans residues 192 to 211 (NGQYNIKNGHDICRANRINN). The chain crosses the membrane as a helical span at residues 212–232 (YTVSGIFIVTVVNVLISAFTV). The Extracellular portion of the chain corresponds to 233 to 245 (DRDTVPALPANTT).

It belongs to the ninjurin family. As to quaternary structure, homooligomer. Cleaved by Mmp1 protease to generate the Secreted ninjurin-A form.

The protein resides in the cell membrane. The protein localises to the secreted. Its function is as follows. Effector of non-apoptotic necrotic cell death that mediates plasma membrane rupture (cytolysis): oligomerizes in response to death stimuli and promotes plasma membrane rupture by introducing hydrophilic faces of 2 alpha helices into the hydrophobic membrane, leading to release intracellular molecules that propagate the inflammatory response. Also acts as a homophilic transmembrane adhesion molecule that promotes cell adhesion by mediating homophilic interactions via its extracellular region. Functionally, secreted form generated by cleavage, which acts as a negative regulator of cell adhesion. Promotes the loss of cell adhesion in a cell non-autonomous manner. This chain is Ninjurin-A, found in Drosophila melanogaster (Fruit fly).